A 481-amino-acid polypeptide reads, in one-letter code: ATP synthase subunit beta, chloroplastic (481 aa).

Position 161–168 (161–168) interacts with ATP; sequence GGAGVGKT.

Belongs to the ATPase alpha/beta chains family. F-type ATPases have 2 components, CF(1) - the catalytic core - and CF(0) - the membrane proton channel. CF(1) has five subunits: alpha(3), beta(3), gamma(1), delta(1), epsilon(1). CF(0) has four main subunits: a(1), b(1), b'(1) and c(9-12).

It localises to the plastid. Its subcellular location is the chloroplast thylakoid membrane. It catalyses the reaction ATP + H2O + 4 H(+)(in) = ADP + phosphate + 5 H(+)(out). Its function is as follows. Produces ATP from ADP in the presence of a proton gradient across the membrane. The catalytic sites are hosted primarily by the beta subunits. The polypeptide is ATP synthase subunit beta, chloroplastic (Pylaiella littoralis (Seaweed)).